The primary structure comprises 265 residues: DNA repair protein RecO (265 aa).

The protein belongs to the RecO family.

In terms of biological role, involved in DNA repair and RecF pathway recombination. The chain is DNA repair protein RecO from Mycobacterium marinum (strain ATCC BAA-535 / M).